The chain runs to 62 residues: UPF0434 protein Tola_2233 (62 aa).

Belongs to the UPF0434 family.

The chain is UPF0434 protein Tola_2233 from Tolumonas auensis (strain DSM 9187 / NBRC 110442 / TA 4).